Here is a 391-residue protein sequence, read N- to C-terminus: MSGRFGRFGGQYVPETVMNALIELEREFEKAKQDKDFMEEYRYYLREYSGRPTPLYYAENLTKKLGGAKIYLKREDLNHTGAHKINNVLGQILLAKRMNKKRVIAETGAGQHGVATATAAAMFGMECEIFMGEEDIKRQSLNVFRMKLLGAKVTPVKSGTGTLKDAVNEAIRDWVTNINDTFYVIGSVVGPHPYPTMVRDFQRVIGDEAKEQILQKEGRLPDYVIACVGGGSNAMGIFYPFIEDKEVKLIGVEAAGEGIETGKHAAAMAKGSVGVLHGMMTYLLQDEEGRIMPVYSISAGLDYPGVGPEHAFLKESNRAQYVYATDEEALAAFMDLSQTEGIIPALESAHALAYAMKLAPNLTKDNIIIVNLSGRGDKDVNTVAKVLGVEL.

Lys-84 bears the N6-(pyridoxal phosphate)lysine mark.

Belongs to the TrpB family. In terms of assembly, tetramer of two alpha and two beta chains. Requires pyridoxal 5'-phosphate as cofactor.

The catalysed reaction is (1S,2R)-1-C-(indol-3-yl)glycerol 3-phosphate + L-serine = D-glyceraldehyde 3-phosphate + L-tryptophan + H2O. The protein operates within amino-acid biosynthesis; L-tryptophan biosynthesis; L-tryptophan from chorismate: step 5/5. In terms of biological role, the beta subunit is responsible for the synthesis of L-tryptophan from indole and L-serine. The sequence is that of Tryptophan synthase beta chain from Thermoanaerobacter sp. (strain X514).